We begin with the raw amino-acid sequence, 1401 residues long: DNA polymerase III PolC-type (1401 aa).

An Exonuclease domain is found at 388 to 543 (FVVFDIETTG…EDAKATAEIF (156 aa)).

It belongs to the DNA polymerase type-C family. PolC subfamily.

It is found in the cytoplasm. The catalysed reaction is DNA(n) + a 2'-deoxyribonucleoside 5'-triphosphate = DNA(n+1) + diphosphate. Its function is as follows. Required for replicative DNA synthesis. This DNA polymerase also exhibits 3' to 5' exonuclease activity. The chain is DNA polymerase III PolC-type from Caldanaerobacter subterraneus subsp. tengcongensis (strain DSM 15242 / JCM 11007 / NBRC 100824 / MB4) (Thermoanaerobacter tengcongensis).